Here is a 103-residue protein sequence, read N- to C-terminus: MKTAWLGTFAASALLVAGYAQADADLAKKNNCIACHQVETKVVGPALKDIAAKYADKDDAATYLAGKIKGGSSGVWGQIPMPPNVNVSDADAKALADWILTLK.

An N-terminal signal peptide occupies residues 1 to 22 (MKTAWLGTFAASALLVAGYAQA). Heme c contacts are provided by Cys32, Cys35, His36, and Met81.

Monomer. In terms of processing, binds 1 heme c group covalently per subunit.

The protein localises to the periplasm. Its function is as follows. Monoheme c-type cytochrome. Probable electron donor to membrane cytochrome oxidase and to periplasmic nitrite reductase. The sequence is that of Cytochrome c-552 (cyt) from Nitrosomonas europaea (strain ATCC 19718 / CIP 103999 / KCTC 2705 / NBRC 14298).